The following is a 1063-amino-acid chain: MDAASGILPDYAELFCRSNFSFLHGASSAEELVERAAKQGYRGIAITDECSLAGAPRMHVAAKAVGLPLVVGAYFGVTPDDAAPGHDPGPGAFGLVLLAQNREGYGNLSELISWRRMNAPKGTYRLTPRMLAAPPRALAHLRGVPDCFAILVPTYPARADVLDAQLAWFDALFGERARLGLVQLQRALDGAHREQVRAAGERRGMHIVALGDVTMHIRSCKPLQDTMTAIRLGMPIAECGHALAPNGEQHLRTRQRIAQLFPADALAQTCRMLDACHFSLDDLRYEYPHEIVPAGHTPTSYLAQETWAGARRRYPDGVPDTVRQRIEFELALIADLKYEPYFLTVYDIVKYARSKDILCQGRGSAANSVVCYCLGVTEVNPQQSTLLFERFLSRERGEPPDIDVDFEHQRREEVIQYLYEKYGHDRAALAAAVSTYRPRGALRETGKALGVDPMLVERVAKEHRWFDGSRDLLARFASVGLDPEVPLIRTWAEIAARLLNFPRHLSQHSGGFVVSRGKLTRLVPVENAAMEGRRVIQWDKDDLEALGLMKVDVLALGMLSALHRAFDMITAWRGPPLPDGRPFRLEHIPQDDEATYDMICRADTVGVFQIESRAQMSMLPRLRPRGYYDLVVQVSIVRPGPIQGGAVHPYLERRRIAAGEAHGEITYPSEALERVLERTLGIPIFQEQVMQIAIVAAGFTPGEADALRRAMAAWKRKGDLGKYHERIVAGMLERGYSREFAEQIFEQIKGFGEYGFPESHAASFAKLAYASSWLKRHEPAIFLAALLNSQPMGFYPPAQLVQDAKRHGVTVLPIDATKSGWEASLEAQPGAAPPDGRPAVRLGLSLVRGLGEEAARRIGAARAAGPFASVDELARRACLERRDLEALAAANAFATLAGNRRDALWQAVAAAPIDEAVRPALGAPTEADDVFADYRTIGLTLNRHPVALLRPALDARRLSSAAALRDRRNGRLARACGLVTARQMPGTAKGVLFVTLEDETGCVNVIVRPELLERQRRETLDSQLLAVSGVWQCESDVRHLVAQYLEDLTPLIAGLRTESREFH.

The protein belongs to the DNA polymerase type-C family. DnaE2 subfamily.

It localises to the cytoplasm. It carries out the reaction DNA(n) + a 2'-deoxyribonucleoside 5'-triphosphate = DNA(n+1) + diphosphate. DNA polymerase involved in damage-induced mutagenesis and translesion synthesis (TLS). It is not the major replicative DNA polymerase. The chain is Error-prone DNA polymerase from Burkholderia mallei (strain ATCC 23344).